Here is a 335-residue protein sequence, read N- to C-terminus: Auxin-responsive protein IAA6 (335 aa).

The EAR-like (transcriptional repression) motif lies at 51-55 (LKLGL). 3 disordered regions span residues 81 to 102 (LSFF…GAKR), 143 to 180 (KKGC…VGWP), and 188 to 207 (NLAS…DNAN). Residues 217-321 (NPLVKINMDG…TAKRLRVLRS (105 aa)) enclose the PB1 domain.

The protein belongs to the Aux/IAA family. In terms of assembly, homodimers and heterodimers. Highly expressed in roots. Expressed in shoots and flowers.

The protein resides in the nucleus. Aux/IAA proteins are short-lived transcriptional factors that function as repressors of early auxin response genes at low auxin concentrations. The chain is Auxin-responsive protein IAA6 (IAA6) from Oryza sativa subsp. japonica (Rice).